The chain runs to 270 residues: Regulatory protein RecX (270 aa).

This sequence belongs to the RecX family.

The protein localises to the cytoplasm. Its function is as follows. Modulates RecA activity. This chain is Regulatory protein RecX, found in Bacillus cereus (strain B4264).